The primary structure comprises 128 residues: Glycine cleavage system H protein (128 aa).

The region spanning 24–106 (LVRIGISEFA…HGEGWLLIIR (83 aa)) is the Lipoyl-binding domain. N6-lipoyllysine is present on lysine 65.

Belongs to the GcvH family. As to quaternary structure, the glycine cleavage system is composed of four proteins: P, T, L and H. (R)-lipoate serves as cofactor.

Functionally, the glycine cleavage system catalyzes the degradation of glycine. The H protein shuttles the methylamine group of glycine from the P protein to the T protein. This Prochlorococcus marinus (strain NATL1A) protein is Glycine cleavage system H protein.